We begin with the raw amino-acid sequence, 603 residues long: Aspartate--tRNA(Asp/Asn) ligase (603 aa).

Residue glutamate 187 participates in L-aspartate binding. Positions 211 to 214 (QQFK) are aspartate. 2 residues coordinate L-aspartate: arginine 233 and histidine 461. 233 to 235 (RDE) is a binding site for ATP. Glutamate 495 contributes to the ATP binding site. Arginine 502 contacts L-aspartate. Residue 547–550 (GLDR) coordinates ATP.

The protein belongs to the class-II aminoacyl-tRNA synthetase family. Type 1 subfamily. In terms of assembly, homodimer.

Its subcellular location is the cytoplasm. The enzyme catalyses tRNA(Asx) + L-aspartate + ATP = L-aspartyl-tRNA(Asx) + AMP + diphosphate. Functionally, aspartyl-tRNA synthetase with relaxed tRNA specificity since it is able to aspartylate not only its cognate tRNA(Asp) but also tRNA(Asn). Reaction proceeds in two steps: L-aspartate is first activated by ATP to form Asp-AMP and then transferred to the acceptor end of tRNA(Asp/Asn). The chain is Aspartate--tRNA(Asp/Asn) ligase from Chlorobaculum parvum (strain DSM 263 / NCIMB 8327) (Chlorobium vibrioforme subsp. thiosulfatophilum).